We begin with the raw amino-acid sequence, 154 residues long: UPF0178 protein SPO3827 (154 aa).

Belongs to the UPF0178 family.

This Ruegeria pomeroyi (strain ATCC 700808 / DSM 15171 / DSS-3) (Silicibacter pomeroyi) protein is UPF0178 protein SPO3827.